A 560-amino-acid chain; its full sequence is NRAMP-like transporter smf-3 (560 aa).

Residues 1-43 lie on the Cytoplasmic side of the membrane; it reads MEGEMKCPIEEIREKPEMRKAQQTYEVQVEVEDTPDTTFSWRK. The chain crosses the membrane as a helical span at residues 44-64; it reads LWAFTGPGFLMSIAYLDPGNI. The Extracellular segment spans residues 65–71; sequence ESDLQAG. A helical transmembrane segment spans residues 72–92; sequence AISYFKLIWVLLVAHIMGLLL. Over 93–120 the chain is Cytoplasmic; it reads QRLAARLGVVSGKHMAEIAFSYYPKIPR. The chain crosses the membrane as a helical span at residues 121–141; sequence LVLWMLVESAIVGSDMQEVIG. Residues 142–152 lie on the Extracellular side of the membrane; that stretch reads TAISFYLLSNG. Residues 153-173 traverse the membrane as a helical segment; the sequence is VIPLWAGVLITICDTFTFLFL. Residues 174–182 lie on the Cytoplasmic side of the membrane; it reads EKYGVRKFE. A helical membrane pass occupies residues 183-203; it reads AFFCFLITCMAITFGYEFGVS. Over 204-229 the chain is Extracellular; the sequence is APDAGKMFSGMFVPWCNGCDNNMVMQ. A helical transmembrane segment spans residues 230–250; the sequence is GVAIIGAVIMPHNFYLHSALV. At 251–268 the chain is on the cytoplasmic side; sequence KSRRVDRRRAEKVTEANK. The helical transmembrane segment at 269–289 threads the bilayer; the sequence is YFFIESAFALFVSFIINTLVI. Over 290 to 339 the chain is Extracellular; sequence SVFAQGMYGKTNQDIRDTCYNNTHNGMPDFYKVEFPANNDAAQSDIYHAG. N-linked (GlcNAc...) asparagine glycosylation is present at asparagine 310. A helical transmembrane segment spans residues 340–360; sequence IFLGCTFGIFALYVWAVGILA. The Cytoplasmic segment spans residues 361 to 390; that stretch reads AGQSSTMTGTYAGQFAMEGFIQIKLPQWKR. A helical transmembrane segment spans residues 391 to 411; that stretch reads ILITRSLAILPTLAVVIFSGG. The Extracellular segment spans residues 412 to 420; it reads IDNISSLND. Asparagine 414 carries an N-linked (GlcNAc...) asparagine glycan. Residues 421 to 441 form a helical membrane-spanning segment; the sequence is FLNCLQLIQLPFALIPVLTFV. The Cytoplasmic segment spans residues 442 to 458; the sequence is SDRNIMHEYKLASVSKV. The helical transmembrane segment at 459-479 threads the bilayer; the sequence is VSIVISLIILFINFYFLYSWI. Over 480-486 the chain is Extracellular; the sequence is GSTFGYN. The chain crosses the membrane as a helical span at residues 487-507; sequence AVSIPITIFCAIFYIIFIAYL. Over 508-560 the chain is Cytoplasmic; sequence TYYCLVAMEFISPIQTKWLAEPIYHDFDAPWLEDSENPSTKNTISDDELSMRY.

This sequence belongs to the NRAMP family. As to expression, expressed in dopaminergic neurons (at protein level). Expressed in intestine with a weaker expression in the most proximal and distal regions. Weakly expressed in the hyp1-6, hyp7 and hyp8-12 hypodermis and in head and tail neurons.

It localises to the apical cell membrane. Its subcellular location is the cytoplasmic vesicle membrane. Probable divalent metal ion transporter which regulates the uptake of several heavy metals such as Mn(2+), Al(3+) and iron. Plays a role in modulating Al(3+)-induced dopamine (DA) neuron degeneration through the intracellular sequestration of Al(3+). The protein is NRAMP-like transporter smf-3 of Caenorhabditis elegans.